Here is a 397-residue protein sequence, read N- to C-terminus: Arginine biosynthesis bifunctional protein ArgJ (397 aa).

Substrate is bound by residues T147, K173, T184, E270, N392, and T397. T184 functions as the Nucleophile in the catalytic mechanism.

It belongs to the ArgJ family. In terms of assembly, heterotetramer of two alpha and two beta chains.

The protein localises to the cytoplasm. The catalysed reaction is N(2)-acetyl-L-ornithine + L-glutamate = N-acetyl-L-glutamate + L-ornithine. The enzyme catalyses L-glutamate + acetyl-CoA = N-acetyl-L-glutamate + CoA + H(+). It functions in the pathway amino-acid biosynthesis; L-arginine biosynthesis; L-ornithine and N-acetyl-L-glutamate from L-glutamate and N(2)-acetyl-L-ornithine (cyclic): step 1/1. It participates in amino-acid biosynthesis; L-arginine biosynthesis; N(2)-acetyl-L-ornithine from L-glutamate: step 1/4. In terms of biological role, catalyzes two activities which are involved in the cyclic version of arginine biosynthesis: the synthesis of N-acetylglutamate from glutamate and acetyl-CoA as the acetyl donor, and of ornithine by transacetylation between N(2)-acetylornithine and glutamate. This is Arginine biosynthesis bifunctional protein ArgJ from Streptococcus thermophilus (strain CNRZ 1066).